The chain runs to 398 residues: Palmitoyl-[acyl-carrier-protein] 4-desaturase 3, chloroplastic (398 aa).

A chloroplast-targeting transit peptide spans 1–29; it reads MALRSLFLPNAFPNASSFRGGSRRGAAPR. E139, E177, H180, E230, E263, and H266 together coordinate Fe cation.

This sequence belongs to the fatty acid desaturase type 2 family. In terms of assembly, homodimer. It depends on Fe(2+) as a cofactor. As to expression, preferentially expressed in the flower labellum. Low expression in leaves.

It localises to the plastid. Its subcellular location is the chloroplast stroma. It carries out the reaction hexadecanoyl-[ACP] + 2 reduced [2Fe-2S]-[ferredoxin] + O2 + 2 H(+) = (4Z)-hexadecenoyl-[ACP] + 2 oxidized [2Fe-2S]-[ferredoxin] + 2 H2O. It functions in the pathway lipid metabolism; fatty acid metabolism. Converts palmitoyl-ACP to (4Z)-hexadec-4-enoyl-ACP by introduction of a cis double bond between carbons 4 and 5 of the acyl chain. In Ophrys arachnitiformis subsp. archipelagi (Orchid), this protein is Palmitoyl-[acyl-carrier-protein] 4-desaturase 3, chloroplastic (SAD3).